The following is an 87-amino-acid chain: Cell division topological specificity factor (87 aa).

The protein belongs to the MinE family.

Its function is as follows. Prevents the cell division inhibition by proteins MinC and MinD at internal division sites while permitting inhibition at polar sites. This ensures cell division at the proper site by restricting the formation of a division septum at the midpoint of the long axis of the cell. The protein is Cell division topological specificity factor of Vibrio parahaemolyticus serotype O3:K6 (strain RIMD 2210633).